The following is a 200-amino-acid chain: HEWKKLIMVHHWPMTVCNEKNCEHPPDYWTIHGLWPDKSGECNRSWPFNPDEIKGLLPDMRLYWPDVLHSSPNHSVHFWRHEWEKHGTCAAQLDALNSQRKYFGKTLDLYKELALNSTLQKLGIKPSISYYQISDIKHALVGVYGVVPKVQCLPPKSGEKVQTLGQIELCLTRDLQLQDCPEPGLEICEDGPVFYPPPKE.

An intrachain disulfide couples Cys17 to Cys22. His32 is an active-site residue. Cys42 and Cys89 are disulfide-bonded. 2 N-linked (GlcNAc...) asparagine glycosylation sites follow: Asn43 and Asn73. Residues Glu82 and His86 contribute to the active site. N-linked (GlcNAc...) asparagine glycosylation is present at Asn116. Cystine bridges form between Cys152-Cys188 and Cys170-Cys180.

The protein belongs to the RNase T2 family.

Its subcellular location is the secreted. It is found in the lysosome lumen. The protein localises to the endoplasmic reticulum lumen. The protein resides in the mitochondrion intermembrane space. It catalyses the reaction a ribonucleotidyl-ribonucleotide-RNA + H2O = a 3'-end 3'-phospho-ribonucleotide-RNA + a 5'-end dephospho-ribonucleoside-RNA + H(+). It carries out the reaction an adenylyl-uridine-RNA = a 3'-end 2',3'-cyclophospho-AMP-RNA + a 5'-end dephospho-uridine-RNA. The catalysed reaction is a guanylyl-uridine-RNA = a 3'-end 2',3'-cyclophospho-GMP-RNA + a 5'-end dephospho-uridine-RNA. Inhibited by Zn(2+) and Cu(2+). Ribonuclease that plays an essential role in innate immune response by recognizing and degrading RNAs from microbial pathogens that are subsequently sensed by TLR8. Cleaves preferentially single-stranded RNA molecules between purine and uridine residues, which critically contributes to the supply of catabolic uridine and the generation of purine-2',3'-cyclophosphate-terminated oligoribonucleotides. In turn, RNase T2 degradation products promote the RNA-dependent activation of TLR8. In plasmacytoid dendritic cells, it cooperates with PLD3 or PLD4 5'-&gt;3' exonucleases to process RNA fragments and release 2',3'-cyclic guanosine monophosphate (2',3'-cGMP), a potent stimulatory ligand for TLR7. Also plays a key role in degradation of mitochondrial RNA and processing of non-coding RNA imported from the cytosol into mitochondria. Participates as well in degradation of mitochondrion-associated cytosolic rRNAs. In Sus scrofa (Pig), this protein is Ribonuclease T2 (RNASET2).